A 151-amino-acid chain; its full sequence is Arginine regulator (151 aa).

Belongs to the ArgR family.

The protein localises to the cytoplasm. The protein operates within amino-acid degradation; L-arginine degradation via ADI pathway. Regulates the transcription of the arc operon, involved in arginine catabolism. This Clostridium perfringens (strain 13 / Type A) protein is Arginine regulator (argR1).